A 335-amino-acid chain; its full sequence is Glyceraldehyde-3-phosphate dehydrogenase (335 aa).

Residues T11 to I12 and G110 contribute to the NAD(+) site. S139–N141 contacts D-glyceraldehyde 3-phosphate. The Nucleophile role is filled by C140. Residue R168 participates in NAD(+) binding. H194–G195 serves as a coordination point for D-glyceraldehyde 3-phosphate. An NAD(+)-binding site is contributed by Q301.

Belongs to the glyceraldehyde-3-phosphate dehydrogenase family. In terms of assembly, homotetramer.

It is found in the cytoplasm. It catalyses the reaction D-glyceraldehyde 3-phosphate + phosphate + NADP(+) = (2R)-3-phospho-glyceroyl phosphate + NADPH + H(+). The catalysed reaction is D-glyceraldehyde 3-phosphate + phosphate + NAD(+) = (2R)-3-phospho-glyceroyl phosphate + NADH + H(+). It functions in the pathway carbohydrate degradation; glycolysis; pyruvate from D-glyceraldehyde 3-phosphate: step 1/5. This Halobacterium salinarum (strain ATCC 29341 / DSM 671 / R1) protein is Glyceraldehyde-3-phosphate dehydrogenase.